Reading from the N-terminus, the 459-residue chain is Chromosomal replication initiator protein DnaA (459 aa).

A domain I, interacts with DnaA modulators region spans residues 1–74 (MMEMPIDNLW…ANVVQSILGH (74 aa)). The domain II stretch occupies residues 74–117 (HPVEIYITVAKGEEFEEIGGGGEWELPTTNIINETPNQNRQPNT). The interval 118–334 (ELNAKYVFSR…GALTRALAYI (217 aa)) is domain III, AAA+ region. Positions 162, 164, 165, and 166 each coordinate ATP. Positions 335-459 (SIWGLPMTVA…IKMNSRSRKP (125 aa)) are domain IV, binds dsDNA.

The protein belongs to the DnaA family. Oligomerizes as a right-handed, spiral filament on DNA at oriC.

It is found in the cytoplasm. Its function is as follows. Plays an essential role in the initiation and regulation of chromosomal replication. ATP-DnaA binds to the origin of replication (oriC) to initiate formation of the DNA replication initiation complex once per cell cycle. Binds the DnaA box (a 9 base pair repeat at the origin) and separates the double-stranded (ds)DNA. Forms a right-handed helical filament on oriC DNA; dsDNA binds to the exterior of the filament while single-stranded (ss)DNA is stabiized in the filament's interior. The ATP-DnaA-oriC complex binds and stabilizes one strand of the AT-rich DNA unwinding element (DUE), permitting loading of DNA polymerase. After initiation quickly degrades to an ADP-DnaA complex that is not apt for DNA replication. Binds acidic phospholipids. This Nostoc sp. (strain PCC 7120 / SAG 25.82 / UTEX 2576) protein is Chromosomal replication initiator protein DnaA.